Consider the following 172-residue polypeptide: Large ribosomal subunit protein uL10 (172 aa).

This sequence belongs to the universal ribosomal protein uL10 family. As to quaternary structure, part of the ribosomal stalk of the 50S ribosomal subunit. The N-terminus interacts with L11 and the large rRNA to form the base of the stalk. The C-terminus forms an elongated spine to which L12 dimers bind in a sequential fashion forming a multimeric L10(L12)X complex.

Forms part of the ribosomal stalk, playing a central role in the interaction of the ribosome with GTP-bound translation factors. The sequence is that of Large ribosomal subunit protein uL10 from Macrococcus caseolyticus (strain JCSC5402) (Macrococcoides caseolyticum).